Here is a 309-residue protein sequence, read N- to C-terminus: Porphobilinogen deaminase (309 aa).

S-(dipyrrolylmethanemethyl)cysteine is present on C241.

This sequence belongs to the HMBS family. Monomer. Dipyrromethane is required as a cofactor.

It carries out the reaction 4 porphobilinogen + H2O = hydroxymethylbilane + 4 NH4(+). It functions in the pathway porphyrin-containing compound metabolism; protoporphyrin-IX biosynthesis; coproporphyrinogen-III from 5-aminolevulinate: step 2/4. In terms of biological role, tetrapolymerization of the monopyrrole PBG into the hydroxymethylbilane pre-uroporphyrinogen in several discrete steps. This is Porphobilinogen deaminase from Bacillus mycoides (strain KBAB4) (Bacillus weihenstephanensis).